A 274-amino-acid polypeptide reads, in one-letter code: Large ribosomal subunit protein uL2 (274 aa).

The segment at 221–274 (RGTAMNPVDHPHGGGEGRNFGKHPVTPWGVQTKGKKTRNNKRTDKSIVRRRSKK) is disordered.

It belongs to the universal ribosomal protein uL2 family. As to quaternary structure, part of the 50S ribosomal subunit. Forms a bridge to the 30S subunit in the 70S ribosome.

In terms of biological role, one of the primary rRNA binding proteins. Required for association of the 30S and 50S subunits to form the 70S ribosome, for tRNA binding and peptide bond formation. It has been suggested to have peptidyltransferase activity; this is somewhat controversial. Makes several contacts with the 16S rRNA in the 70S ribosome. The chain is Large ribosomal subunit protein uL2 from Hamiltonella defensa subsp. Acyrthosiphon pisum (strain 5AT).